Here is a 208-residue protein sequence, read N- to C-terminus: T-cell surface glycoprotein CD8 beta chain (208 aa).

The first 21 residues, 1–21 (MQPWLWLVFSVKLSALWGSSA), serve as a signal peptide directing secretion. One can recognise an Ig-like V-type domain in the interval 22 to 131 (LLQTPSSLLV…MVVFGTGTKL (110 aa)). The Extracellular segment spans residues 22-168 (LLQTPSSLLV…KTQKGLTCGL (147 aa)). Residues asparagine 34, asparagine 88, and asparagine 94 are each glycosylated (N-linked (GlcNAc...) asparagine). A disulfide bridge connects residues cysteine 41 and cysteine 115. The helical transmembrane segment at 169–189 (ITLSLLVACILVLLVSLSVAI) threads the bilayer. At 190–208 (HFHCMRRRARIHFMKQFHK) the chain is on the cytoplasmic side.

In terms of assembly, forms disulfide-linked heterodimers with CD8A at the cell surface. Interacts with CD3D; this interaction couples TCR-CD3 with CD8. Interacts with LCK. Phosphorylated as a consequence of T-cell activation. In terms of processing, palmitoylated at the cytoplasmic tail and thereby targets the heterodimer CD8A/CD8B to lipid rafts unlike CD8A homodimers.

Its subcellular location is the cell membrane. Integral membrane glycoprotein that plays an essential role in the immune response and serves multiple functions in responses against both external and internal offenses. In T-cells, functions primarily as a coreceptor for MHC class I molecule:peptide complex. The antigens presented by class I peptides are derived from cytosolic proteins while class II derived from extracellular proteins. Interacts simultaneously with the T-cell receptor (TCR) and the MHC class I proteins presented by antigen presenting cells (APCs). In turn, recruits the Src kinase LCK to the vicinity of the TCR-CD3 complex. A palmitoylation site in the cytoplasmic tail of CD8B chain contributes to partitioning of CD8 into the plasma membrane lipid rafts where signaling proteins are enriched. Once LCK recruited, it initiates different intracellular signaling pathways by phosphorylating various substrates ultimately leading to lymphokine production, motility, adhesion and activation of cytotoxic T-lymphocytes (CTLs). Additionally, plays a critical role in thymic selection of CD8+ T-cells. The sequence is that of T-cell surface glycoprotein CD8 beta chain (Cd8b) from Rattus norvegicus (Rat).